A 196-amino-acid polypeptide reads, in one-letter code: Imidazole glycerol phosphate synthase subunit HisH (196 aa).

The Glutamine amidotransferase type-1 domain maps to 2–196 (NVVILDTGCA…AKLLKNFLEM (195 aa)). Cysteine 77 serves as the catalytic Nucleophile. Residues histidine 178 and glutamate 180 contribute to the active site.

Heterodimer of HisH and HisF.

It is found in the cytoplasm. The enzyme catalyses 5-[(5-phospho-1-deoxy-D-ribulos-1-ylimino)methylamino]-1-(5-phospho-beta-D-ribosyl)imidazole-4-carboxamide + L-glutamine = D-erythro-1-(imidazol-4-yl)glycerol 3-phosphate + 5-amino-1-(5-phospho-beta-D-ribosyl)imidazole-4-carboxamide + L-glutamate + H(+). The catalysed reaction is L-glutamine + H2O = L-glutamate + NH4(+). It functions in the pathway amino-acid biosynthesis; L-histidine biosynthesis; L-histidine from 5-phospho-alpha-D-ribose 1-diphosphate: step 5/9. IGPS catalyzes the conversion of PRFAR and glutamine to IGP, AICAR and glutamate. The HisH subunit catalyzes the hydrolysis of glutamine to glutamate and ammonia as part of the synthesis of IGP and AICAR. The resulting ammonia molecule is channeled to the active site of HisF. This Shigella flexneri protein is Imidazole glycerol phosphate synthase subunit HisH.